Reading from the N-terminus, the 319-residue chain is ATP-dependent 6-phosphofructokinase (319 aa).

Gly11 provides a ligand contact to ATP. 21-25 lines the ADP pocket; the sequence is RAVVR. ATP contacts are provided by residues 72–73 and 102–105; these read RC and GDGS. Asp103 serves as a coordination point for Mg(2+). 125–127 is a substrate binding site; sequence TID. The active-site Proton acceptor is Asp127. Arg154 lines the ADP pocket. Substrate-binding positions include Arg162 and 169–171; that span reads MGR. Residues 185–187, Lys211, and 213–215 each bind ADP; these read GAE and KMH. Residues Glu222, Arg243, and 249 to 252 each bind substrate; that span reads HIQR.

It belongs to the phosphofructokinase type A (PFKA) family. ATP-dependent PFK group I subfamily. Prokaryotic clade 'B1' sub-subfamily. As to quaternary structure, homotetramer. Mg(2+) is required as a cofactor.

The protein resides in the cytoplasm. It carries out the reaction beta-D-fructose 6-phosphate + ATP = beta-D-fructose 1,6-bisphosphate + ADP + H(+). The protein operates within carbohydrate degradation; glycolysis; D-glyceraldehyde 3-phosphate and glycerone phosphate from D-glucose: step 3/4. With respect to regulation, allosterically activated by ADP and other diphosphonucleosides, and allosterically inhibited by phosphoenolpyruvate. Its function is as follows. Catalyzes the phosphorylation of D-fructose 6-phosphate to fructose 1,6-bisphosphate by ATP, the first committing step of glycolysis. The sequence is that of ATP-dependent 6-phosphofructokinase from Clostridium botulinum (strain ATCC 19397 / Type A).